The sequence spans 835 residues: Cap-specific mRNA (nucleoside-2'-O-)-methyltransferase 1 (835 aa).

The disordered stretch occupies residues 1-66 (MKRRNDSECT…TEGKQRSSDS (66 aa)). The short motif at 2 to 19 (KRRNDSECTAPLKKQKKR) is the Bipartite nuclear localization signal element. Residues serine 28, serine 31, serine 53, serine 66, and serine 91 each carry the phosphoserine modification. The segment covering 57–66 (TEGKQRSSDS) has biased composition (basic and acidic residues). The 47-residue stretch at 87 to 133 (YNSVSQKLMAKMGFKEGEGLGKYSQGRKDIVEASNQKGRRGLGLTLQ) folds into the G-patch domain. Residue lysine 108 is modified to N6-acetyllysine. Residues 203–207 (KSVFD) and arginine 218 contribute to the substrate site. The RrmJ-type SAM-dependent 2'-O-MTase domain maps to 231-450 (FFLNRAAMKM…ERYVVCKGLK (220 aa)). Asparagine 234 contacts S-adenosyl-L-methionine. Lysine 239 is an active-site residue. Residues 277-283 (CAGPGGF) and 335-336 (DI) each bind S-adenosyl-L-methionine. Aspartate 364 is an active-site residue. Substrate is bound at residue 374-376 (NLQ). Lysine 404 (proton acceptor) is an active-site residue. Asparagine 439 provides a ligand contact to substrate. An interaction with POLR2A region spans residues 727–835 (SSGTPKLSYT…VLSFIQTHSA (109 aa)). Residues 752-786 (RTVNEPWTMGFSKSFKRKFFYNKKTKNSTFDLPAD) form the WW domain.

As to quaternary structure, interacts with POLR2A (via C-terminus).

It localises to the nucleus. It carries out the reaction a 5'-end (N(7)-methyl 5'-triphosphoguanosine)-ribonucleoside in mRNA + S-adenosyl-L-methionine = a 5'-end (N(7)-methyl 5'-triphosphoguanosine)-(2'-O-methyl-ribonucleoside) in mRNA + S-adenosyl-L-homocysteine + H(+). Its function is as follows. S-adenosyl-L-methionine-dependent methyltransferase that mediates mRNA cap1 2'-O-ribose methylation to the 5'-cap structure of mRNAs. Methylates the ribose of the first nucleotide of a m(7)GpppG-capped mRNA and small nuclear RNA (snRNA) to produce m(7)GpppRm (cap1). Displays a preference for cap0 transcripts. Cap1 modification is linked to higher levels of translation. May be involved in the interferon response pathway. This is Cap-specific mRNA (nucleoside-2'-O-)-methyltransferase 1 (CMTR1) from Bos taurus (Bovine).